A 196-amino-acid chain; its full sequence is Putative archaetidylserine decarboxylase proenzyme (196 aa).

S164 acts as the Schiff-base intermediate with substrate; via pyruvic acid in catalysis. The residue at position 164 (S164) is a Pyruvic acid (Ser); by autocatalysis.

It belongs to the phosphatidylserine decarboxylase family. PSD-A subfamily. Heterodimer of a large membrane-associated beta subunit and a small pyruvoyl-containing alpha subunit. Requires pyruvate as cofactor. Is synthesized initially as an inactive proenzyme. Formation of the active enzyme involves a self-maturation process in which the active site pyruvoyl group is generated from an internal serine residue via an autocatalytic post-translational modification. Two non-identical subunits are generated from the proenzyme in this reaction, and the pyruvate is formed at the N-terminus of the alpha chain, which is derived from the carboxyl end of the proenzyme. The post-translation cleavage follows an unusual pathway, termed non-hydrolytic serinolysis, in which the side chain hydroxyl group of the serine supplies its oxygen atom to form the C-terminus of the beta chain, while the remainder of the serine residue undergoes an oxidative deamination to produce ammonia and the pyruvoyl prosthetic group on the alpha chain.

The protein resides in the cell membrane. The enzyme catalyses archaetidylserine + H(+) = archaetidylethanolamine + CO2. In terms of biological role, catalyzes the formation of archaetidylethanolamine (PtdEtn) from archaetidylserine (PtdSer). The polypeptide is Putative archaetidylserine decarboxylase proenzyme (Halobacterium salinarum (strain ATCC 700922 / JCM 11081 / NRC-1) (Halobacterium halobium)).